The following is a 134-amino-acid chain: MRSLFYIAVAVAVFARSSAVAAFTNADDSQLLSKTTPDFATDAMASSDSRKRFLRATDPEDGDLQADDEERTKFKSLADIIKHLDDQDMKHVAGILANMDDIHHKNVLAKALESGRITQKNYDDAIAALQRTSK.

A signal peptide spans 1 to 22; it reads MRSLFYIAVAVAVFARSSAVAA. Positions 43 to 65 are disordered; sequence AMASSDSRKRFLRATDPEDGDLQ. Positions 48–58 are enriched in basic and acidic residues; it reads DSRKRFLRATD. A RxLR-dEER motif is present at residues 52–71; that stretch reads RFLRATDPEDGDLQADDEER.

This sequence belongs to the RxLR effector family.

It is found in the secreted. Functionally, effector that enhances plant susceptibility to P.parasitica in Nicotiana benthamiana and Arabidopsis thaliana. Triggers non-specific cell death in a variety of plants, including tobacco, tomato, potato and A.thaliana. E4-induced cell death is dependent on HSP90, NPK and SGT1, suggesting that PpE4 is recognized by the plant immune system. The chain is RxLR effector protein 4 from Phytophthora nicotianae (strain INRA-310) (Phytophthora parasitica).